Consider the following 276-residue polypeptide: NH(3)-dependent NAD(+) synthetase (276 aa).

43–50 (GISGGVDS) contacts ATP. Asp49 provides a ligand contact to Mg(2+). Arg146 contributes to the deamido-NAD(+) binding site. Thr166 contacts ATP. Glu171 contacts Mg(2+). Lys179 and Asp186 together coordinate deamido-NAD(+). Positions 195 and 217 each coordinate ATP. A deamido-NAD(+)-binding site is contributed by 266–267 (HK).

It belongs to the NAD synthetase family. As to quaternary structure, homodimer.

The catalysed reaction is deamido-NAD(+) + NH4(+) + ATP = AMP + diphosphate + NAD(+) + H(+). It functions in the pathway cofactor biosynthesis; NAD(+) biosynthesis; NAD(+) from deamido-NAD(+) (ammonia route): step 1/1. Catalyzes the ATP-dependent amidation of deamido-NAD to form NAD. Uses ammonia as a nitrogen source. This is NH(3)-dependent NAD(+) synthetase from Shewanella sediminis (strain HAW-EB3).